The sequence spans 382 residues: D-galactonate dehydratase (382 aa).

D183 is a binding site for Mg(2+). Residue H185 is the Proton donor of the active site. Residues E209 and E235 each coordinate Mg(2+). H285 (proton acceptor) is an active-site residue. The segment at N361–W382 is disordered.

This sequence belongs to the mandelate racemase/muconate lactonizing enzyme family. GalD subfamily. It depends on Mg(2+) as a cofactor.

The enzyme catalyses D-galactonate = 2-dehydro-3-deoxy-D-galactonate + H2O. Its pathway is carbohydrate acid metabolism; D-galactonate degradation; D-glyceraldehyde 3-phosphate and pyruvate from D-galactonate: step 1/3. Catalyzes the dehydration of D-galactonate to 2-keto-3-deoxy-D-galactonate. The sequence is that of D-galactonate dehydratase from Xanthomonas oryzae pv. oryzae (strain MAFF 311018).